The following is a 193-amino-acid chain: 3-isopropylmalate dehydratase small subunit (193 aa).

The protein belongs to the LeuD family. LeuD type 1 subfamily. As to quaternary structure, heterodimer of LeuC and LeuD.

The enzyme catalyses (2R,3S)-3-isopropylmalate = (2S)-2-isopropylmalate. It functions in the pathway amino-acid biosynthesis; L-leucine biosynthesis; L-leucine from 3-methyl-2-oxobutanoate: step 2/4. In terms of biological role, catalyzes the isomerization between 2-isopropylmalate and 3-isopropylmalate, via the formation of 2-isopropylmaleate. This is 3-isopropylmalate dehydratase small subunit from Bacillus cereus (strain ZK / E33L).